The primary structure comprises 248 residues: Clathrin light chain A (248 aa).

The tract at residues 1-93 is disordered; sequence MAELDPFGAP…YQESNGPTDS (93 aa). Over residues 13-25 the composition is skewed to gly residues; the sequence is APGGPALGNGVAG. Positions 100 to 162 are involved in binding clathrin heavy chain; that stretch reads VDRLQSEPES…QLQKTKASNR (63 aa). 2 positions are modified to phosphoserine: serine 105 and serine 206. Residue lysine 223 is modified to N6-acetyllysine. Position 236 is a phosphoserine (serine 236). Lysine 242 carries the N6-acetyllysine modification.

The protein belongs to the clathrin light chain family. Clathrin coats are formed from molecules containing 3 heavy chains and 3 light chains. Interacts with CALY; the interaction stimulates clathrin self-assembly and clathrin-mediated endocytosis. Interacts with CKAP5 and TACC3 forming the TACC3/ch-TOG/clathrin complex located at spindle inter-microtubules bridges; the complex implicates clathrin triskelions.

It is found in the cytoplasmic vesicle membrane. The protein localises to the membrane. The protein resides in the coated pit. Its subcellular location is the cytoplasm. It localises to the cytoskeleton. It is found in the spindle. Clathrin is the major protein of the polyhedral coat of coated pits and vesicles. Acts as a component of the TACC3/ch-TOG/clathrin complex proposed to contribute to stabilization of kinetochore fibers of the mitotic spindle by acting as inter-microtubule bridge. The protein is Clathrin light chain A (Clta) of Rattus norvegicus (Rat).